The primary structure comprises 186 residues: TATA-box-binding protein 2 (186 aa).

2 repeat units span residues 10–86 (IQNV…FDKL) and 101–179 (VQNI…VERI). Residues lysine 53 and lysine 63 each participate in a glycyl lysine isopeptide (Lys-Gly) (interchain with G-Cter in SAMP2) cross-link.

The protein belongs to the TBP family.

General factor that plays a role in the activation of archaeal genes transcribed by RNA polymerase. Binds specifically to the TATA box promoter element which lies close to the position of transcription initiation. The polypeptide is TATA-box-binding protein 2 (tbp2) (Haloferax volcanii (strain ATCC 29605 / DSM 3757 / JCM 8879 / NBRC 14742 / NCIMB 2012 / VKM B-1768 / DS2) (Halobacterium volcanii)).